We begin with the raw amino-acid sequence, 427 residues long: Glutamate-1-semialdehyde 2,1-aminomutase (427 aa).

K268 carries the post-translational modification N6-(pyridoxal phosphate)lysine.

It belongs to the class-III pyridoxal-phosphate-dependent aminotransferase family. HemL subfamily. The cofactor is pyridoxal 5'-phosphate.

The protein resides in the cytoplasm. The catalysed reaction is (S)-4-amino-5-oxopentanoate = 5-aminolevulinate. It functions in the pathway porphyrin-containing compound metabolism; protoporphyrin-IX biosynthesis; 5-aminolevulinate from L-glutamyl-tRNA(Glu): step 2/2. The polypeptide is Glutamate-1-semialdehyde 2,1-aminomutase (Methanococcus maripaludis (strain C5 / ATCC BAA-1333)).